The primary structure comprises 410 residues: Pyrophosphate--fructose 6-phosphate 1-phosphotransferase (410 aa).

Gly12 is a diphosphate binding site. Residue Asp121 participates in Mg(2+) binding. Substrate is bound by residues 149-151 (TID), 194-196 (MGR), Glu266, and 323-326 (YFSR). Catalysis depends on Asp151, which acts as the Proton acceptor.

This sequence belongs to the phosphofructokinase type A (PFKA) family. PPi-dependent PFK group II subfamily. Clade 'P' sub-subfamily. In terms of assembly, homodimer or homotetramer. Requires Mg(2+) as cofactor.

The protein resides in the cytoplasm. It catalyses the reaction beta-D-fructose 6-phosphate + diphosphate = beta-D-fructose 1,6-bisphosphate + phosphate + H(+). The protein operates within carbohydrate degradation; glycolysis; D-glyceraldehyde 3-phosphate and glycerone phosphate from D-glucose: step 3/4. Non-allosteric. Its function is as follows. Catalyzes the phosphorylation of D-fructose 6-phosphate, the first committing step of glycolysis. Uses inorganic phosphate (PPi) as phosphoryl donor instead of ATP like common ATP-dependent phosphofructokinases (ATP-PFKs), which renders the reaction reversible, and can thus function both in glycolysis and gluconeogenesis. Consistently, PPi-PFK can replace the enzymes of both the forward (ATP-PFK) and reverse (fructose-bisphosphatase (FBPase)) reactions. This chain is Pyrophosphate--fructose 6-phosphate 1-phosphotransferase, found in Mastigamoeba balamuthi (Phreatamoeba balamuthi).